The chain runs to 121 residues: Basic phospholipase A2 homolog (121 aa).

7 cysteine pairs are disulfide-bonded: Cys-26–Cys-115, Cys-28–Cys-44, Cys-43–Cys-95, Cys-49–Cys-121, Cys-50–Cys-88, Cys-57–Cys-81, and Cys-75–Cys-86.

It belongs to the phospholipase A2 family. Group II subfamily. K49 sub-subfamily. As to quaternary structure, homodimer. In terms of tissue distribution, expressed by the venom gland.

It localises to the secreted. Snake venom phospholipase A2 homolog that lacks enzymatic activity, but has myotoxic and cytolytic activities. The protein is Basic phospholipase A2 homolog of Metlapilcoatlus nummifer (Mexican jumping pitviper).